The following is a 298-amino-acid chain: GTP cyclohydrolase FolE2 (298 aa).

It belongs to the GTP cyclohydrolase IV family.

It carries out the reaction GTP + H2O = 7,8-dihydroneopterin 3'-triphosphate + formate + H(+). Its pathway is cofactor biosynthesis; 7,8-dihydroneopterin triphosphate biosynthesis; 7,8-dihydroneopterin triphosphate from GTP: step 1/1. Its function is as follows. Converts GTP to 7,8-dihydroneopterin triphosphate. The protein is GTP cyclohydrolase FolE2 of Pseudomonas paraeruginosa (strain DSM 24068 / PA7) (Pseudomonas aeruginosa (strain PA7)).